Here is a 561-residue protein sequence, read N- to C-terminus: Nucleoprotein (561 aa).

A binding site for the cap structure m7GTP region spans residues Val-52–Ile-237. Residues Ser-336–Gln-355 form a disordered region. Mn(2+)-binding residues include Asp-380 and Glu-382. Glu-390, Cys-497, His-500, and Cys-521 together coordinate Zn(2+). Asp-525 lines the Mn(2+) pocket.

It belongs to the arenaviridae nucleocapsid protein family. Homomultimerizes to form the nucleocapsid. Binds to viral genomic RNA. Interacts with glycoprotein G2. Interacts with protein Z; this interaction probably directs the encapsidated genome to budding sites. Interacts with protein L; this interaction does not interfere with Z-L interaction. Interacts with host IKBKE (via Protein kinase domain); the interaction inhibits IKBKE kinase activity.

It is found in the virion. Its subcellular location is the host cytoplasm. In terms of biological role, encapsidates the genome, protecting it from nucleases. The encapsidated genomic RNA is termed the nucleocapsid (NC). Serves as template for viral transcription and replication. The increased presence of protein N in host cell does not seem to trigger the switch from transcription to replication as observed in other negative strain RNA viruses. Through the interaction with host IKBKE, strongly inhibits the phosphorylation and nuclear translocation of host IRF3, a protein involved in interferon activation pathway, leading to the inhibition of interferon-beta and IRF3-dependent promoters activation. Also encodes a functional 3'-5' exoribonuclease that degrades preferentially dsRNA substrates and thereby participates in the suppression of interferon induction. The chain is Nucleoprotein from Cavia cutleri (Guinea pig).